We begin with the raw amino-acid sequence, 174 residues long: MTDIADVIRSLMREVPDFPEPGVHFKDLTPVLADARGLAEVSKAIADAARGADLVAGVDARGFLLGGAVAVTLGIGVLAVRKGGKLPPPVIGATYTLEYGTATLEVPAEGIELAGRSVVVIDDVLATGGTLAATHQLLTRAGANVTGAVVMMELAALGGRAALEPLEVTSLYTA.

It belongs to the purine/pyrimidine phosphoribosyltransferase family. Homodimer.

It localises to the cytoplasm. It carries out the reaction AMP + diphosphate = 5-phospho-alpha-D-ribose 1-diphosphate + adenine. It functions in the pathway purine metabolism; AMP biosynthesis via salvage pathway; AMP from adenine: step 1/1. Its function is as follows. Catalyzes a salvage reaction resulting in the formation of AMP, that is energically less costly than de novo synthesis. The chain is Adenine phosphoribosyltransferase from Mycolicibacterium vanbaalenii (strain DSM 7251 / JCM 13017 / BCRC 16820 / KCTC 9966 / NRRL B-24157 / PYR-1) (Mycobacterium vanbaalenii).